The following is a 308-amino-acid chain: MSQQVIVTTKEQIQKMKKYYLSQLTSTPQGAIFRAKTNNAVITAYQSGKVLFQGSAPESEASKWGNVPLNDKKKHSLEQKHSYSPQAELFTDNHIGSDEAGTGDYFGPITVAALFATKEQQLKLKQIGVRDSKHLNDTKIKQIAKEIAHLQIPYSLLLLPNGKYNKLQAKGWSQGKMKAMLHHHAIDKLLQKIDVRSLKGIVIDQFCQPPVYKKYLQSEKKTLHPNTTFITKAESHSISVAAASILARARFVNAMDELSEEAKMELPKGASAKVDQTAARLIRSKGFEELDKYAKTHFANTQKAQKLL.

The RNase H type-2 domain occupies 92–308 (DNHIGSDEAG…ANTQKAQKLL (217 aa)). Asp98, Glu99, and Asp204 together coordinate a divalent metal cation.

Belongs to the RNase HII family. RnhC subfamily. The cofactor is Mn(2+). Mg(2+) is required as a cofactor.

The protein localises to the cytoplasm. The enzyme catalyses Endonucleolytic cleavage to 5'-phosphomonoester.. Functionally, endonuclease that specifically degrades the RNA of RNA-DNA hybrids. The polypeptide is Ribonuclease HIII (Oceanobacillus iheyensis (strain DSM 14371 / CIP 107618 / JCM 11309 / KCTC 3954 / HTE831)).